Here is a 251-residue protein sequence, read N- to C-terminus: Anamorsin homolog (251 aa).

An N-terminal SAM-like domain region spans residues 1 to 154 (MINFSNTLVI…AENPDFNKSD (154 aa)). The interval 155–167 (DDNNLVSSDEEIY) is linker. The [2Fe-2S] cluster site is built by Cys-170, Cys-181, Cys-184, and Cys-186. The segment at 170–186 (CEDKKKVVNRVCDNCTC) is fe-S binding site A. Positions 216, 219, 227, and 230 each coordinate [4Fe-4S] cluster. 2 consecutive short sequence motifs (cx2C motif) follow at residues 216 to 219 (CGNC) and 227 to 230 (CGSC). The interval 216–230 (CGNCYLGDAFRCGSC) is fe-S binding site B.

This sequence belongs to the anamorsin family. As to quaternary structure, monomer. It depends on [2Fe-2S] cluster as a cofactor. [4Fe-4S] cluster is required as a cofactor.

It is found in the cytoplasm. The protein localises to the mitochondrion intermembrane space. Component of the cytosolic iron-sulfur (Fe-S) protein assembly (CIA) machinery. Required for the maturation of extramitochondrial Fe-S proteins. Part of an electron transfer chain functioning in an early step of cytosolic Fe-S biogenesis, facilitating the de novo assembly of a [4Fe-4S] cluster on the cytosolic Fe-S scaffold complex. Electrons are transferred from NADPH via a FAD- and FMN-containing diflavin oxidoreductase. Together with the diflavin oxidoreductase, also required for the assembly of the diferric tyrosyl radical cofactor of ribonucleotide reductase (RNR), probably by providing electrons for reduction during radical cofactor maturation in the catalytic small subunit. The sequence is that of Anamorsin homolog from Plasmodium yoelii yoelii.